The primary structure comprises 277 residues: Diaminopimelate epimerase (277 aa).

Positions 17, 50, and 68 each coordinate substrate. Cys-77 acts as the Proton donor in catalysis. Residues 78 to 79, Asn-162, Asn-195, and 213 to 214 contribute to the substrate site; these read GN and ER. The active-site Proton acceptor is Cys-222. Residue 223–224 participates in substrate binding; sequence GT.

This sequence belongs to the diaminopimelate epimerase family. In terms of assembly, homodimer.

It localises to the cytoplasm. It catalyses the reaction (2S,6S)-2,6-diaminopimelate = meso-2,6-diaminopimelate. The protein operates within amino-acid biosynthesis; L-lysine biosynthesis via DAP pathway; DL-2,6-diaminopimelate from LL-2,6-diaminopimelate: step 1/1. In terms of biological role, catalyzes the stereoinversion of LL-2,6-diaminopimelate (L,L-DAP) to meso-diaminopimelate (meso-DAP), a precursor of L-lysine and an essential component of the bacterial peptidoglycan. The polypeptide is Diaminopimelate epimerase (Phenylobacterium zucineum (strain HLK1)).